The primary structure comprises 501 residues: MLO-like protein 5 (501 aa).

Residues 1 to 22 (MAGGGGGSTSGEGPRELDQTPT) are Extracellular-facing. Residues 23–43 (WAVSTVCGVIILISIVLELMI) form a helical membrane-spanning segment. The Cytoplasmic portion of the chain corresponds to 44–68 (HKIGEVFTERRKKALYEALQKIKNE). The chain crosses the membrane as a helical span at residues 69 to 89 (LMVLGFISLLLTFGQNYIASL). Residues 90–151 (CVASRYGHAM…ISLNALHQVH (62 aa)) are Extracellular-facing. Residues 152 to 172 (IFIFFLAVFHVIYSAITMMLG) traverse the membrane as a helical segment. Residues 173 to 273 (RAKIRGWKVW…IKRSLEDDFK (101 aa)) lie on the Cytoplasmic side of the membrane. Residues 274–294 (VVVGISPELWAFVMLFLLFDV) form a helical membrane-spanning segment. Position 295 (His295) is a topological domain, extracellular. Residues 296–316 (GWYVTAVITMIPPLLTLAIGT) traverse the membrane as a helical segment. At 317–359 (KLQAIISDMALEIQERHAVIQGMPLVNVSDRHFWFSRPALVLH) the chain is on the cytoplasmic side. Residues 360-380 (IIHFILFQNAFEITYFFWIWY) traverse the membrane as a helical segment. Topologically, residues 381-391 (EFGLRSCFHHH) are extracellular. The helical transmembrane segment at 392–412 (FALIIIRVALGVGVQFLCSYI) threads the bilayer. At 413–501 (TLPLYALVTQ…SQSRDLLSGP (89 aa)) the chain is on the cytoplasmic side. Residues 443-501 (WHKNAKKKSETPGQTQPPLPNLRPKTGGDIESASPANITASVDVKESDQSQSRDLLSGP) form a disordered region. Positions 450–471 (KSETPGQTQPPLPNLRPKTGGD) are calmodulin-binding. Positions 491–501 (QSQSRDLLSGP) are enriched in polar residues.

Belongs to the MLO family.

It is found in the membrane. Its function is as follows. May be involved in modulation of pathogen defense and leaf cell death. Activity seems to be regulated by Ca(2+)-dependent calmodulin binding and seems not to require heterotrimeric G proteins. In Arabidopsis thaliana (Mouse-ear cress), this protein is MLO-like protein 5 (MLO5).